The chain runs to 352 residues: Probable cytosolic iron-sulfur protein assembly protein CIAO1 homolog (352 aa).

WD repeat units follow at residues 14 to 53, 63 to 102, 107 to 146, 152 to 191, 200 to 240, 268 to 306, and 319 to 352; these read GHDDRVWNVAWSPQGDMLASCSGDKTVRIWSRRQPRPSEQ, CHTRTIRSVAWSPTGRALATASFDATVAVWELSSGVWEQV, GHENEVKCVAWNPDGRLIATCGRDRSVWIWESMPGREFEC, GHSQDVKAVTWHPSGELLVSAGYDDTIKLWTYDGDEWGCA, GHES…TSTP, HHRRTVFSLDWAPTGLIATGDGDDSILAEEEASGLLTQP, and AHGADVNCVRWNPAEPRLLASCSDDGLIRLWWLR.

Belongs to the WD repeat CIA1 family.

Functionally, essential component of the cytosolic iron-sulfur (Fe/S) protein assembly machinery. Required for the maturation of extramitochondrial Fe/S proteins. This Chlamydomonas reinhardtii (Chlamydomonas smithii) protein is Probable cytosolic iron-sulfur protein assembly protein CIAO1 homolog.